The sequence spans 463 residues: Glutamate--tRNA ligase (463 aa).

The 'HIGH' region motif lies at 8–18 (PSPTGYLHIGG). Positions 236 to 240 (RLSKR) match the 'KMSKS' region motif. Position 239 (K239) interacts with ATP.

This sequence belongs to the class-I aminoacyl-tRNA synthetase family. Glutamate--tRNA ligase type 1 subfamily. As to quaternary structure, monomer.

The protein resides in the cytoplasm. It catalyses the reaction tRNA(Glu) + L-glutamate + ATP = L-glutamyl-tRNA(Glu) + AMP + diphosphate. In terms of biological role, catalyzes the attachment of glutamate to tRNA(Glu) in a two-step reaction: glutamate is first activated by ATP to form Glu-AMP and then transferred to the acceptor end of tRNA(Glu). In Nitrosomonas europaea (strain ATCC 19718 / CIP 103999 / KCTC 2705 / NBRC 14298), this protein is Glutamate--tRNA ligase.